Here is a 351-residue protein sequence, read N- to C-terminus: Histidinol-phosphate aminotransferase (351 aa).

Lysine 215 is modified (N6-(pyridoxal phosphate)lysine).

This sequence belongs to the class-II pyridoxal-phosphate-dependent aminotransferase family. Histidinol-phosphate aminotransferase subfamily. The cofactor is pyridoxal 5'-phosphate.

The catalysed reaction is L-histidinol phosphate + 2-oxoglutarate = 3-(imidazol-4-yl)-2-oxopropyl phosphate + L-glutamate. The protein operates within amino-acid biosynthesis; L-histidine biosynthesis; L-histidine from 5-phospho-alpha-D-ribose 1-diphosphate: step 7/9. The sequence is that of Histidinol-phosphate aminotransferase from Methanocorpusculum labreanum (strain ATCC 43576 / DSM 4855 / Z).